The primary structure comprises 1026 residues: Glutactin (1026 aa).

The signal sequence occupies residues 1 to 17 (MKPLLLVLALCGAQVHA). 2 positions are modified to sulfotyrosine: Tyr-26 and Tyr-29. A glycan (N-linked (GlcNAc...) asparagine) is linked at Asn-115. Cys-123 and Cys-145 are oxidised to a cystine. Tyr-182 bears the Sulfotyrosine mark. Cysteines 298 and 316 form a disulfide. N-linked (GlcNAc...) asparagine glycosylation is found at Asn-368 and Asn-402. The residue at position 559 (Tyr-559) is a Sulfotyrosine. Residues 601-641 (PITTTTTTTTTTTTTSRPYAYNPYANWQNRPSQQHPNWHPA) form a disordered region. Residues 603–615 (TTTTTTTTTTTTT) show a composition bias toward low complexity. Polar residues predominate over residues 625–636 (ANWQNRPSQQHP). Residue Tyr-645 is modified to Sulfotyrosine. Disordered regions lie at residues 659 to 695 (EREQ…REQE) and 723 to 1026 (EREQ…NSRN). The segment covering 723-752 (EREQYEREQQEREQREREELERQQREREQQ) has biased composition (basic and acidic residues). Tyr-727 carries the sulfotyrosine modification. N-linked (GlcNAc...) asparagine glycosylation is present at Asn-810. Basic and acidic residues predominate over residues 811–854 (FSEEDREQQQQEQLRREQQEQQEREYQLQLEREQQEREQQERGQ). 6 positions are modified to sulfotyrosine: Tyr-836, Tyr-862, Tyr-865, Tyr-868, Tyr-922, and Tyr-928. The segment covering 855–866 (QEPGPEEYPSYE) has biased composition (low complexity). Residues 867-893 (EYSRALQEKNAERDRIYAEEQERERQQ) are compositionally biased toward basic and acidic residues. The span at 923–944 (DGDRSYAEEQEREQQRRDQVEQ) shows a compositional bias: basic and acidic residues. The span at 945–969 (EREEQPDEDQGEEYERSPDEEEAAE) shows a compositional bias: acidic residues. A sulfotyrosine mark is found at Tyr-981, Tyr-984, and Tyr-1006. The span at 1002–1026 (EEERYRAQQEEEDRIQAERERNSRN) shows a compositional bias: basic and acidic residues.

It in the N-terminal section; belongs to the type-B carboxylesterase/lipase family. Post-translationally, extensively O-glycosylated and also N-glycosylated. In terms of processing, about four tyrosines are sulfated.

It is found in the secreted. The protein resides in the extracellular space. The protein localises to the extracellular matrix. It localises to the basement membrane. Its function is as follows. Not known. Binds calcium ions. The sequence is that of Glutactin (Glt) from Drosophila melanogaster (Fruit fly).